The sequence spans 97 residues: Putative regulatory protein Dole_1911 (97 aa).

The protein belongs to the RemA family.

The sequence is that of Putative regulatory protein Dole_1911 from Desulfosudis oleivorans (strain DSM 6200 / JCM 39069 / Hxd3) (Desulfococcus oleovorans).